The chain runs to 165 residues: Protein SprT (165 aa).

The 149-residue stretch at 10 to 158 folds into the SprT-like domain; sequence EACYRQAEHF…CRRCKATLVF (149 aa). His-69 lines the Zn(2+) pocket. Glu-70 is a catalytic residue. His-73 lines the Zn(2+) pocket.

Belongs to the SprT family. The cofactor is Zn(2+).

The protein resides in the cytoplasm. This Pseudomonas aeruginosa (strain LESB58) protein is Protein SprT.